We begin with the raw amino-acid sequence, 422 residues long: Glutamate 2,3-aminomutase (422 aa).

One can recognise a Radical SAM core domain in the interval 150–371 (RRYPDRLIIN…AIPTYIVNAP (222 aa)). Residues cysteine 164, cysteine 168, and cysteine 171 each coordinate [4Fe-4S] cluster. Residue lysine 376 is modified to N6-(pyridoxal phosphate)lysine.

The protein belongs to the radical SAM superfamily. Requires pyridoxal 5'-phosphate as cofactor. The cofactor is [4Fe-4S] cluster.

The catalysed reaction is L-glutamate = 3-aminopentanedioate. Functionally, catalyzes the interconversion of L-glutamate and L-beta-glutamate. Does not have L-lysine 2,3-aminomutase activity. This is Glutamate 2,3-aminomutase (eam) from Clostridioides difficile (strain 630) (Peptoclostridium difficile).